The sequence spans 277 residues: NLP effector protein Pc109095 (277 aa).

Residues 1–19 (MKFIFAFVLCLAVAQTALG) form the signal peptide. Residues 119 to 125 (RSRHLWA) carry the Hepta-peptide GHRHDWE motif motif. N199 carries an N-linked (GlcNAc...) asparagine glycan.

The protein belongs to the Necrosis inducing protein (NPP1) family.

It is found in the secreted. Secreted effector that contributes strongly to virulence during infection by P.capsici. The sequence is that of NLP effector protein Pc109095 from Phytophthora capsici.